The primary structure comprises 179 residues: Large ribosomal subunit protein bL9 (179 aa).

A disordered region spans residues 155–179 (KPEEAPVPVAEEPTAETEQAEVAAE). Over residues 167–179 (PTAETEQAEVAAE) the composition is skewed to acidic residues.

Belongs to the bacterial ribosomal protein bL9 family.

Functionally, binds to the 23S rRNA. This Porphyromonas gingivalis (strain ATCC BAA-308 / W83) protein is Large ribosomal subunit protein bL9.